Reading from the N-terminus, the 937-residue chain is Protocadherin alpha-7 (937 aa).

An N-terminal signal peptide occupies residues Met-1–Gly-29. Cadherin domains are found at residues Gln-30–Phe-133, Pro-134–Phe-242, Asp-243–Leu-350, Thr-351–Phe-455, Ala-456–Leu-565, and Val-581–Ala-678. Residues Gln-30–Asn-697 lie on the Extracellular side of the membrane. Cys-96 and Cys-102 are oxidised to a cystine. Residues Asn-254 and Asn-265 are each glycosylated (N-linked (GlcNAc...) asparagine). A glycan (N-linked (GlcNAc...) asparagine) is linked at Asn-548. Residues Val-698–Tyr-718 form a helical membrane-spanning segment. Residues Thr-719 to Gln-937 are Cytoplasmic-facing. Disordered stretches follow at residues Arg-755–Tyr-795 and Ile-814–Gln-937. PXXP repeat units follow at residues Pro-774–Pro-777, Pro-786–Pro-789, Pro-819–Pro-822, Pro-860–Pro-863, and Pro-878–Pro-881. Residues Pro-774 to Pro-881 are 5 X 4 AA repeats of P-X-X-P. The span at Ser-775–Arg-787 shows a compositional bias: polar residues. The span at Asp-896 to Lys-910 shows a compositional bias: basic and acidic residues.

In terms of assembly, forms homodimers in trans (molecules expressed by two different cells). Forms promiscuous heterodimers in cis (at the plasma membrane of the same cell) with other protocadherins.

It localises to the cell membrane. Functionally, calcium-dependent cell-adhesion protein involved in cells self-recognition and non-self discrimination. Thereby, it is involved in the establishment and maintenance of specific neuronal connections in the brain. The polypeptide is Protocadherin alpha-7 (Homo sapiens (Human)).